A 262-amino-acid chain; its full sequence is Cerebellar degeneration-related antigen 1 (262 aa).

Tandem repeats lie at residues 3–8, 9–14, 15–20, 21–26, 27–32, 33–38, 39–44, 45–50, 51–56, 57–62, 63–68, 69–74, 75–80, 81–86, 87–92, 93–98, 99–104, 105–110, 111–116, 117–122, 123–128, 129–134, 135–140, 141–146, 147–152, 153–158, 159–164, 165–170, 171–176, 177–182, 183–188, 189–194, 195–200, and 201–206. Positions 3–140 are 23 X 6 AA approximate repeats; the sequence is WLEDVDFLED…EDLEAIGRCG (138 aa). The interval 141 to 176 is 6 X 6 AA approximate repeats; that stretch reads FSGRHGFFGRRRFSGRPKLSGRLGLLGRRGFSGRLG. The interval 177–206 is 5 X 6 AA approximate repeats; it reads GYWKTWIFWKTWIFWKTWIFRKTYIGWKTW.

As to expression, brain; predominantly expressed in normal neuroectodermal tissues and in certain malignant tumors.

The polypeptide is Cerebellar degeneration-related antigen 1 (CDR1) (Homo sapiens (Human)).